The sequence spans 402 residues: Beta sliding clamp (402 aa).

It belongs to the beta sliding clamp family. As to quaternary structure, forms a ring-shaped head-to-tail homodimer around DNA which binds and tethers DNA polymerases and other proteins to the DNA. The DNA replisome complex has a single clamp-loading complex (3 tau and 1 each of delta, delta', psi and chi subunits) which binds 3 Pol III cores (1 core on the leading strand and 2 on the lagging strand) each with a beta sliding clamp dimer. Additional proteins in the replisome are other copies of gamma, psi and chi, Ssb, DNA helicase and RNA primase.

The protein resides in the cytoplasm. In terms of biological role, confers DNA tethering and processivity to DNA polymerases and other proteins. Acts as a clamp, forming a ring around DNA (a reaction catalyzed by the clamp-loading complex) which diffuses in an ATP-independent manner freely and bidirectionally along dsDNA. Initially characterized for its ability to contact the catalytic subunit of DNA polymerase III (Pol III), a complex, multichain enzyme responsible for most of the replicative synthesis in bacteria; Pol III exhibits 3'-5' exonuclease proofreading activity. The beta chain is required for initiation of replication as well as for processivity of DNA replication. The sequence is that of Beta sliding clamp (dnaN) from Mycobacterium bovis (strain ATCC BAA-935 / AF2122/97).